The primary structure comprises 474 residues: Eukaryotic translation initiation factor 3 subunit L (474 aa).

The region spanning 255–449 (DAIRMFSHIL…DLDYALQGDL (195 aa)) is the PCI domain.

The protein belongs to the eIF-3 subunit L family. In terms of assembly, component of the eukaryotic translation initiation factor 3 (eIF-3) complex.

The protein localises to the cytoplasm. In terms of biological role, component of the eukaryotic translation initiation factor 3 (eIF-3) complex, which is involved in protein synthesis of a specialized repertoire of mRNAs and, together with other initiation factors, stimulates binding of mRNA and methionyl-tRNAi to the 40S ribosome. The eIF-3 complex specifically targets and initiates translation of a subset of mRNAs involved in cell proliferation. This chain is Eukaryotic translation initiation factor 3 subunit L, found in Chaetomium globosum (strain ATCC 6205 / CBS 148.51 / DSM 1962 / NBRC 6347 / NRRL 1970) (Soil fungus).